Here is a 734-residue protein sequence, read N- to C-terminus: MSASEAGVTEQVKKLSVKDSSNDAVKPNKKENKKSKQQSLYLDPEPTFIEERIEMFDRLQKEYNDKVASMPRVPLKIVLKDGAVKEATSWETTPMDIAKGISKSLADRLCISKVNGQLWDLDRPFEGEANEEIKLELLDFESDEGKKVFWHSSAHVLGESCECHLGAHICLGPPTDDGFFYEMAVRDSMKDISESPERTVSQADFPGLEGVAKNVIKQKQKFERLVMSKEDLLKMFHYSKYKTYLVQTKVPDGGATTVYRCGKLIDLCVGPHIPHTGRIKAFKLLKNSSCYFLGDATNDSLQRVYGISFPDKKLMDAHLKFLAEASMRDHRKIGKEQELFLFNEMSPGSCFWLPHGTRIYNTLVDLLRTEYRKRGYEEVITPNMYNSKLWETSGHWANYKENMFTFEVEKETFGLKPMNCPGHCLMFKSRERSYRELPWRVADFGVIHRNEFSGALSGLTRVRRFQQDDAHIFCTHDQIESEIENIFNFLQYIYGVFGFEFKMELSTRPEKYVGKIETWDAAESKLESALKKWGGNWEINAGDGAFYGPKIDIMISDALRRWHQCATIQLDFQLPNRFELEFKSKDQDSESYERPVMIHRAILGSVERMTAILTEHFAGKWPFWLSPRQVLVVPVGVKYQGYAEDVRNKLHDAGFYADVDLTGNTLQKKVRNGQMLKYNFIFIVGEQEMNEKSVNIRNRDVMEQQGKNATVSVEEVLKQLRNLKDEKRGDNVLA.

Positions 1-41 (MSASEAGVTEQVKKLSVKDSSNDAVKPNKKENKKSKQQSLY) are disordered. A compositionally biased stretch (basic and acidic residues) spans 11-30 (QVKKLSVKDSSNDAVKPNKK). The TGS domain maps to 69–135 (SMPRVPLKIV…EGEANEEIKL (67 aa)). Phosphoserine is present on residues serine 195 and serine 289. Residues threonine 297 and threonine 381 each carry the phosphothreonine modification. Serine 453 and serine 457 each carry phosphoserine. Threonine 460 carries the post-translational modification Phosphothreonine. Position 605 is a phosphoserine (serine 605).

The protein belongs to the class-II aminoacyl-tRNA synthetase family.

The protein localises to the cytoplasm. It carries out the reaction tRNA(Thr) + L-threonine + ATP = L-threonyl-tRNA(Thr) + AMP + diphosphate + H(+). This is Threonine--tRNA ligase, cytoplasmic (THS1) from Saccharomyces cerevisiae (strain ATCC 204508 / S288c) (Baker's yeast).